A 299-amino-acid polypeptide reads, in one-letter code: uncharacterized protein (299 aa).

Over residues 1-10 the composition is skewed to polar residues; that stretch reads MTSIIQSPPL. Disordered regions lie at residues 1–30, 54–89, and 148–212; these read MTSI…NNNN, KLNN…INNN, and QDYT…SDYV. The segment covering 56–89 has biased composition (low complexity); the sequence is NNNNNNNNNNNNNNNNNNNNNNNNSSSNNNINNN. 2 stretches are compositionally biased toward acidic residues: residues 150–169 and 177–212; these read YTDE…DEEE and ECEE…SDYV.

This is an uncharacterized protein from Dictyostelium discoideum (Social amoeba).